The sequence spans 424 residues: UDP-N-acetylglucosamine 1-carboxyvinyltransferase (424 aa).

Residue 22–23 (KN) coordinates phosphoenolpyruvate. Residue R93 participates in UDP-N-acetyl-alpha-D-glucosamine binding. The active-site Proton donor is the C117. C117 is modified (2-(S-cysteinyl)pyruvic acid O-phosphothioketal). UDP-N-acetyl-alpha-D-glucosamine contacts are provided by residues 162 to 165 (KVSV), D307, and I329.

Belongs to the EPSP synthase family. MurA subfamily.

It localises to the cytoplasm. It carries out the reaction phosphoenolpyruvate + UDP-N-acetyl-alpha-D-glucosamine = UDP-N-acetyl-3-O-(1-carboxyvinyl)-alpha-D-glucosamine + phosphate. Its pathway is cell wall biogenesis; peptidoglycan biosynthesis. Cell wall formation. Adds enolpyruvyl to UDP-N-acetylglucosamine. The polypeptide is UDP-N-acetylglucosamine 1-carboxyvinyltransferase (Actinobacillus pleuropneumoniae serotype 7 (strain AP76)).